Consider the following 279-residue polypeptide: Energy-coupling factor transporter ATP-binding protein EcfA1 (279 aa).

The 236-residue stretch at 5-240 (IELNNIQFNY…GEALVEMGLD (236 aa)) folds into the ABC transporter domain. 40-47 (GHNGSGKS) lines the ATP pocket.

It belongs to the ABC transporter superfamily. Energy-coupling factor EcfA family. Forms a stable energy-coupling factor (ECF) transporter complex composed of 2 membrane-embedded substrate-binding proteins (S component), 2 ATP-binding proteins (A component) and 2 transmembrane proteins (T component).

It localises to the cell membrane. Functionally, ATP-binding (A) component of a common energy-coupling factor (ECF) ABC-transporter complex. Unlike classic ABC transporters this ECF transporter provides the energy necessary to transport a number of different substrates. The chain is Energy-coupling factor transporter ATP-binding protein EcfA1 from Enterococcus faecalis (strain ATCC 700802 / V583).